The chain runs to 79 residues: Calcium/calmodulin-dependent protein kinase II inhibitor 2 (79 aa).

The segment at 43–69 (KRPPKLGQIGRAKRVVIEDDRIDEVLK) is inhibitory domain.

The protein belongs to the CAMK2N family.

The protein resides in the nucleus. The protein localises to the cytoplasm. It localises to the cytosol. Potent and specific cellular inhibitor of CaM-kinase II (CAMK2). Traps Ca(2+)/calmodulin on CAMK2. This Xenopus laevis (African clawed frog) protein is Calcium/calmodulin-dependent protein kinase II inhibitor 2 (camk2n2).